A 639-amino-acid chain; its full sequence is Signal recognition particle receptor subunit alpha (639 aa).

A disordered region spans residues 132-317 (APTTMKKFED…STKPSATKGT (186 aa)). 2 stretches are compositionally biased toward basic and acidic residues: residues 137 to 146 (KKFEDSEKAK) and 153 to 165 (IETR…EKAK). S178 carries the post-translational modification Phosphoserine. A compositionally biased stretch (basic and acidic residues) spans 204 to 240 (ELSKEEQIRRKREEFIQKHGRGMEKSSKSSKSDAPKE). T285 carries the post-translational modification Phosphothreonine. A phosphoserine mark is found at S297, S298, and S299. Polar residues predominate over residues 305–315 (AQNSTKPSATK). The segment at 420-637 (YVVTFCGVNG…NAKAVVAALM (218 aa)) is NG domain. 426–433 (GVNGVGKS) contributes to the GTP binding site. At S474 the chain carries Phosphoserine. Residue 521-525 (DTAGR) participates in GTP binding. At T579 the chain carries Phosphothreonine. 589–592 (TKFD) serves as a coordination point for GTP.

It belongs to the GTP-binding SRP family. As to quaternary structure, heterodimer with SRPRB. Interacts with the signal recognition particle (SRP) complex subunit SRP54.

It localises to the endoplasmic reticulum membrane. Functionally, component of the SRP (signal recognition particle) receptor. Ensures, in conjunction with the signal recognition particle, the correct targeting of the nascent secretory proteins to the endoplasmic reticulum membrane system. Forms a guanosine 5'-triphosphate (GTP)-dependent complex with the SRP subunit SRP54. SRP receptor compaction and GTPase rearrangement drive SRP-mediated cotranslational protein translocation into the ER. This chain is Signal recognition particle receptor subunit alpha, found in Bos taurus (Bovine).